We begin with the raw amino-acid sequence, 123 residues long: Small ribosomal subunit protein uS12 (123 aa).

Residues 1 to 32 (MPTINQLIRKPREAQKARDKAPALQSSPQKRG) form a disordered region. Over residues 10 to 21 (KPREAQKARDKA) the composition is skewed to basic and acidic residues. Asp89 carries the 3-methylthioaspartic acid modification.

This sequence belongs to the universal ribosomal protein uS12 family. In terms of assembly, part of the 30S ribosomal subunit. Contacts proteins S8 and S17. May interact with IF1 in the 30S initiation complex.

Functionally, with S4 and S5 plays an important role in translational accuracy. Its function is as follows. Interacts with and stabilizes bases of the 16S rRNA that are involved in tRNA selection in the A site and with the mRNA backbone. Located at the interface of the 30S and 50S subunits, it traverses the body of the 30S subunit contacting proteins on the other side and probably holding the rRNA structure together. The combined cluster of proteins S8, S12 and S17 appears to hold together the shoulder and platform of the 30S subunit. This Azorhizobium caulinodans (strain ATCC 43989 / DSM 5975 / JCM 20966 / LMG 6465 / NBRC 14845 / NCIMB 13405 / ORS 571) protein is Small ribosomal subunit protein uS12.